The following is a 365-amino-acid chain: Mitogen-activated protein kinase HOG1 (365 aa).

In terms of domain architecture, Protein kinase spans 20–306; it reads YSDLQPVGMG…ATNALAHEYL (287 aa). ATP-binding positions include 26-34 and K49; that span reads VGMGAFGLV. Catalysis depends on D148, which acts as the Proton acceptor. The TXY motif lies at 178–180; sequence TGY.

Belongs to the protein kinase superfamily. Ser/Thr protein kinase family. MAP kinase subfamily. HOG1 sub-subfamily. Requires Mg(2+) as cofactor.

Its subcellular location is the cytoplasm. The protein resides in the nucleus. It carries out the reaction L-seryl-[protein] + ATP = O-phospho-L-seryl-[protein] + ADP + H(+). It catalyses the reaction L-threonyl-[protein] + ATP = O-phospho-L-threonyl-[protein] + ADP + H(+). Its function is as follows. Proline-directed serine/threonine-protein kinase involved in a signal transduction pathway that is activated by changes in the osmolarity of the extracellular environment. Controls osmotic regulation of transcription of target genes. Involved in environmental stress response, hyphal growth, conidiation and possibly secondary metabolism such as ustiloxin biosynthesis or the biosynthesis of other phytotoxic compounds that are inhibitory to rice shoot growth during seed germination. Plays a key role in responses to cell wall and membrane stresses but not oxidative stress. This chain is Mitogen-activated protein kinase HOG1, found in Ustilaginoidea virens (Rice false smut fungus).